Consider the following 194-residue polypeptide: ATP-dependent Clp protease proteolytic subunit (194 aa).

Residue Ser97 is the Nucleophile of the active site. The active site involves His122.

The protein belongs to the peptidase S14 family. As to quaternary structure, fourteen ClpP subunits assemble into 2 heptameric rings which stack back to back to give a disk-like structure with a central cavity, resembling the structure of eukaryotic proteasomes.

Its subcellular location is the cytoplasm. The enzyme catalyses Hydrolysis of proteins to small peptides in the presence of ATP and magnesium. alpha-casein is the usual test substrate. In the absence of ATP, only oligopeptides shorter than five residues are hydrolyzed (such as succinyl-Leu-Tyr-|-NHMec, and Leu-Tyr-Leu-|-Tyr-Trp, in which cleavage of the -Tyr-|-Leu- and -Tyr-|-Trp bonds also occurs).. Its function is as follows. Cleaves peptides in various proteins in a process that requires ATP hydrolysis. Has a chymotrypsin-like activity. Plays a major role in the degradation of misfolded proteins. The chain is ATP-dependent Clp protease proteolytic subunit from Lactobacillus delbrueckii subsp. bulgaricus (strain ATCC BAA-365 / Lb-18).